An 82-amino-acid chain; its full sequence is Penaeidin-3b (82 aa).

A signal peptide spans 1 to 19 (MRLVVCLVFLASFALVCQG). A Pyrrolidone carboxylic acid modification is found at glutamine 20. 3 disulfides stabilise this stretch: cysteine 51–cysteine 66, cysteine 55–cysteine 73, and cysteine 67–cysteine 74. Serine 81 bears the Serine amide mark.

The protein belongs to the penaeidin family. Higher expression in hemocytes and to a lesser extent in heart, testis, gills, intestine, lymphoid organ and hepatopancreas. Traces in eyes and subcuticular epithelium. Not present in the brain.

The protein localises to the cytoplasmic granule. Functionally, antibacterial activity against M.luteus and E.coli bacteria. Antifungal activity against N.crassa and F.oxysporum. Presents chitin-binding activity. This is Penaeidin-3b from Penaeus vannamei (Whiteleg shrimp).